The chain runs to 290 residues: Phosphatidylserine decarboxylase proenzyme (290 aa).

Residues D96, H153, and S257 each act as charge relay system; for autoendoproteolytic cleavage activity in the active site. S257 (schiff-base intermediate with substrate; via pyruvic acid; for decarboxylase activity) is an active-site residue. S257 is subject to Pyruvic acid (Ser); by autocatalysis.

This sequence belongs to the phosphatidylserine decarboxylase family. PSD-B subfamily. Prokaryotic type I sub-subfamily. As to quaternary structure, heterodimer of a large membrane-associated beta subunit and a small pyruvoyl-containing alpha subunit. Pyruvate serves as cofactor. Post-translationally, is synthesized initially as an inactive proenzyme. Formation of the active enzyme involves a self-maturation process in which the active site pyruvoyl group is generated from an internal serine residue via an autocatalytic post-translational modification. Two non-identical subunits are generated from the proenzyme in this reaction, and the pyruvate is formed at the N-terminus of the alpha chain, which is derived from the carboxyl end of the proenzyme. The autoendoproteolytic cleavage occurs by a canonical serine protease mechanism, in which the side chain hydroxyl group of the serine supplies its oxygen atom to form the C-terminus of the beta chain, while the remainder of the serine residue undergoes an oxidative deamination to produce ammonia and the pyruvoyl prosthetic group on the alpha chain. During this reaction, the Ser that is part of the protease active site of the proenzyme becomes the pyruvoyl prosthetic group, which constitutes an essential element of the active site of the mature decarboxylase.

The protein localises to the cell membrane. The catalysed reaction is a 1,2-diacyl-sn-glycero-3-phospho-L-serine + H(+) = a 1,2-diacyl-sn-glycero-3-phosphoethanolamine + CO2. Its pathway is phospholipid metabolism; phosphatidylethanolamine biosynthesis; phosphatidylethanolamine from CDP-diacylglycerol: step 2/2. Its function is as follows. Catalyzes the formation of phosphatidylethanolamine (PtdEtn) from phosphatidylserine (PtdSer). This chain is Phosphatidylserine decarboxylase proenzyme, found in Haemophilus influenzae (strain 86-028NP).